Here is a 160-residue protein sequence, read N- to C-terminus: Cytochrome b6-f complex subunit 4 (160 aa).

A run of 3 helical transmembrane segments spans residues 36–56 (LLYM…SLAV), 95–115 (LIGI…PFIE), and 131–151 (AVFL…TLPI).

The protein belongs to the cytochrome b family. PetD subfamily. As to quaternary structure, the 4 large subunits of the cytochrome b6-f complex are cytochrome b6, subunit IV (17 kDa polypeptide, petD), cytochrome f and the Rieske protein, while the 4 small subunits are petG, petL, petM and petN. The complex functions as a dimer.

The protein localises to the plastid. It localises to the chloroplast thylakoid membrane. In terms of biological role, component of the cytochrome b6-f complex, which mediates electron transfer between photosystem II (PSII) and photosystem I (PSI), cyclic electron flow around PSI, and state transitions. The polypeptide is Cytochrome b6-f complex subunit 4 (Bigelowiella natans (Pedinomonas minutissima)).